Reading from the N-terminus, the 240-residue chain is 3-deoxy-D-manno-octulosonic acid kinase (240 aa).

The active site involves Asp170.

This sequence belongs to the protein kinase superfamily. KdkA/RfaP family.

It localises to the cell inner membrane. The catalysed reaction is an alpha-Kdo-(2-&gt;6)-lipid IVA + ATP = a 4-O-phospho-alpha-Kdo-(2-&gt;6)-lipid IVA + ADP + H(+). It functions in the pathway bacterial outer membrane biogenesis; LPS core biosynthesis. In terms of biological role, catalyzes the ATP-dependent phosphorylation of the 3-deoxy-D-manno-octulosonic acid (Kdo) residue in Kdo-lipid IV(A) at the 4-OH position. This chain is 3-deoxy-D-manno-octulosonic acid kinase, found in Actinobacillus succinogenes (strain ATCC 55618 / DSM 22257 / CCUG 43843 / 130Z).